A 258-amino-acid chain; its full sequence is Tryptophan synthase alpha chain (258 aa).

Residues glutamate 47 and aspartate 58 each act as proton acceptor in the active site.

The protein belongs to the TrpA family. In terms of assembly, tetramer of two alpha and two beta chains.

The catalysed reaction is (1S,2R)-1-C-(indol-3-yl)glycerol 3-phosphate + L-serine = D-glyceraldehyde 3-phosphate + L-tryptophan + H2O. It functions in the pathway amino-acid biosynthesis; L-tryptophan biosynthesis; L-tryptophan from chorismate: step 5/5. Functionally, the alpha subunit is responsible for the aldol cleavage of indoleglycerol phosphate to indole and glyceraldehyde 3-phosphate. The chain is Tryptophan synthase alpha chain from Bacillus cereus (strain B4264).